A 372-amino-acid chain; its full sequence is Rab9 effector protein with kelch motifs (372 aa).

Kelch repeat units follow at residues 49–95 (KVFI…FIPS), 100–146 (RIWV…TSSA), 151–200 (QLYV…VMVA), 204–250 (KLFI…SAVA), and 254–303 (HVYI…IIPW). Position 133 is a phosphoserine (Ser-133). Residues 314 to 340 (SNSLTLNHEAEKEDSADKVMSHSGDSH) form a disordered region. A compositionally biased stretch (basic and acidic residues) spans 321-340 (HEAEKEDSADKVMSHSGDSH).

In terms of assembly, interacts with PIKFYVE; the interaction recruits RABEPK to the endosomal membrane. Interacts with RAB9 in its GTP-bound conformation. Post-translationally, phosphorylated on Ser residues by PIKFYVE.

The protein localises to the cytoplasm. It localises to the endosome membrane. Functionally, rab9 effector required for endosome to trans-Golgi network (TGN) transport. This is Rab9 effector protein with kelch motifs from Homo sapiens (Human).